The following is a 393-amino-acid chain: Methylthioribose kinase (393 aa).

ATP-binding positions include N38, K53, and 107–109 (EDL). D225 is a substrate binding site. Residue 242-244 (DPE) coordinates ATP. R332 is a binding site for substrate.

It belongs to the methylthioribose kinase family. In terms of assembly, homodimer.

It catalyses the reaction 5-(methylsulfanyl)-D-ribose + ATP = 5-(methylsulfanyl)-alpha-D-ribose 1-phosphate + ADP + H(+). Its pathway is amino-acid biosynthesis; L-methionine biosynthesis via salvage pathway; S-methyl-5-thio-alpha-D-ribose 1-phosphate from S-methyl-5'-thioadenosine (hydrolase route): step 2/2. Its function is as follows. Catalyzes the phosphorylation of methylthioribose into methylthioribose-1-phosphate. The protein is Methylthioribose kinase of Bacillus cereus (strain ATCC 14579 / DSM 31 / CCUG 7414 / JCM 2152 / NBRC 15305 / NCIMB 9373 / NCTC 2599 / NRRL B-3711).